The sequence spans 399 residues: Elongation factor Tu (399 aa).

One can recognise a tr-type G domain in the interval K10–E209. The interval G19 to T26 is G1. G19–T26 is a binding site for GTP. T26 serves as a coordination point for Mg(2+). The G2 stretch occupies residues G60–N64. Residues D81–G84 form a G3 region. Residues D81–H85 and N136–D139 contribute to the GTP site. The G4 stretch occupies residues N136–D139. Residues S174–L176 form a G5 region.

It belongs to the TRAFAC class translation factor GTPase superfamily. Classic translation factor GTPase family. EF-Tu/EF-1A subfamily. As to quaternary structure, monomer.

It localises to the cytoplasm. The enzyme catalyses GTP + H2O = GDP + phosphate + H(+). Functionally, GTP hydrolase that promotes the GTP-dependent binding of aminoacyl-tRNA to the A-site of ribosomes during protein biosynthesis. This is Elongation factor Tu from Nautilia profundicola (strain ATCC BAA-1463 / DSM 18972 / AmH).